Consider the following 348-residue polypeptide: Centromere protein L (348 aa).

This sequence belongs to the CENP-L/IML3 family.

The protein localises to the nucleus. Its subcellular location is the chromosome. The protein resides in the centromere. Probable component of a centromeric complex involved in assembly of kinetochore proteins, mitotic progression and chromosome segregation. The polypeptide is Centromere protein L (cenpl) (Xenopus tropicalis (Western clawed frog)).